The sequence spans 456 residues: RuvB-like helicase 1 (456 aa).

70–77 (GPPGTGKT) is a binding site for ATP.

Belongs to the RuvB family. In terms of assembly, forms homohexameric rings. May form a dodecamer with rept made of two stacked hexameric rings. Component of the chromatin remodeling Ino80 complex.

The protein resides in the nucleus. It carries out the reaction ATP + H2O = ADP + phosphate + H(+). Its function is as follows. Acts as a transcriptional coactivator in Wg signaling caused by altered arm signaling. Pont and rept interfere antagonistically with nuclear arm signaling function, and are required to enhance or reduce arm activity, respectively. Also an essential cofactor for the normal function of Myc; required for cellular proliferation and growth. Proposed core component of the chromatin remodeling Ino80 complex which is involved in transcriptional regulation, DNA replication and probably DNA repair. The chain is RuvB-like helicase 1 from Drosophila pseudoobscura pseudoobscura (Fruit fly).